Here is a 431-residue protein sequence, read N- to C-terminus: Histidinol dehydrogenase (431 aa).

Tyrosine 127, glutamine 189, and asparagine 212 together coordinate NAD(+). Serine 237, glutamine 259, and histidine 262 together coordinate substrate. Zn(2+) is bound by residues glutamine 259 and histidine 262. Active-site proton acceptor residues include glutamate 326 and histidine 327. Histidine 327, aspartate 360, glutamate 414, and histidine 419 together coordinate substrate. Residue aspartate 360 participates in Zn(2+) binding. Histidine 419 is a Zn(2+) binding site.

This sequence belongs to the histidinol dehydrogenase family. Requires Zn(2+) as cofactor.

The enzyme catalyses L-histidinol + 2 NAD(+) + H2O = L-histidine + 2 NADH + 3 H(+). The protein operates within amino-acid biosynthesis; L-histidine biosynthesis; L-histidine from 5-phospho-alpha-D-ribose 1-diphosphate: step 9/9. Its function is as follows. Catalyzes the sequential NAD-dependent oxidations of L-histidinol to L-histidinaldehyde and then to L-histidine. This Xylella fastidiosa (strain Temecula1 / ATCC 700964) protein is Histidinol dehydrogenase.